The following is a 442-amino-acid chain: Mannosylglycerate hydrolase (442 aa).

Substrate is bound by residues Tyr-38, 42-45 (WSWD), Tyr-90, Gln-116, and Gly-176. Residue Asp-178 is the Proton donor of the active site. Substrate is bound by residues Arg-213 and 369-370 (YW). Glu-413 functions as the Proton acceptor in the catalytic mechanism.

This sequence belongs to the glycosyl hydrolase 63 family. Homodimer in solution.

It carries out the reaction (2R)-2-O-(alpha-D-mannosyl)-glycerate + H2O = D-mannose + (R)-glycerate. The enzyme catalyses (2R)-2-O-(alpha-D-glucopyranosyl)-glycerate + H2O = (R)-glycerate + D-glucose. Its activity is regulated as follows. Activity is not stimulated by divalent cations and not affected in the presence of EDTA. In terms of biological role, hydrolase that catalyzes the hydrolysis of mannosylglycerate (MG), a solute produced in response to osmotic stress in thermophiles, into mannose and glycerate. Can also hydrolyze glucosylglycerate (GG) to glucose and glycerate, with similar catalytic efficiency. Is highly specific for MG and GG, and cannot use mannosylglyceramide (MGA), glucosylglycerol, mannosylglucosylglycerate (MGG), glucosylglucosylglycerate (GGG) or trehalose as substrates. This chain is Mannosylglycerate hydrolase, found in Rubrobacter radiotolerans (Arthrobacter radiotolerans).